Reading from the N-terminus, the 796-residue chain is Pathogenesis-related homeodomain protein (796 aa).

2 disordered regions span residues 34–57 (KKGK…EELC) and 80–99 (VKKT…KVEV). Over residues 81–90 (KKTRKRKSKR) the composition is skewed to basic residues. Residues 190 to 247 (HIFCAECNSREAFPDNDIILCDGTCNRAFHQKCLDPPLETESIPPGDQGWFCKFCDCK) form a PHD-type zinc finger. Disordered regions lie at residues 282–347 (SEAT…STGS), 393–422 (LQEQ…STLV), and 511–736 (NRKT…TEEE). Positions 292–303 (WPSDDSKDDDYD) are enriched in acidic residues. The homeobox DNA-binding region spans 452 to 511 (GGRRRMFRLPRNAVEKLRQVFAETELPSKAVRDRLAKELSLDPEKVNKWFKNTRYMALRN). Composition is skewed to polar residues over residues 538-547 (ENNTETNEVQ) and 560-569 (ATNQNILSPC). Low complexity predominate over residues 570–580 (NNNQEEFQQEN). A compositionally biased stretch (polar residues) spans 581–600 (VSFPSPTDESQQYLEQNDSS). 4 consecutive repeat copies span residues 605-631 (PHEK…MMKE), 632-658 (PHEE…MIEE), 659-685 (PHEE…MMEE), and 686-712 (PHDE…MTEE). Positions 605–735 (PHEKQSSEIS…KETGRKMTEE (131 aa)) are 5 X 27 AA tandem repeats. Basic and acidic residues-rich tracts occupy residues 624-636 (TESK…HEEL), 645-690 (AAEE…HDEL), and 700-733 (VEEK…RKMT). The stretch at 713–735 (SHEELSNEMSLEEKETGRKMTEE) is one 5; truncated repeat. Residues 738–759 (LEAVMEMLCRTENKLLDVTQRL) form a leucine-zipper region.

This sequence belongs to the PHD-associated homeobox family.

It is found in the nucleus. Specifically binds to the fungal elicitor-responsive DNA element, 5'-CTAATTGTTTA-3', of the gene PR2 promoter. This is Pathogenesis-related homeodomain protein (PRH) from Arabidopsis thaliana (Mouse-ear cress).